Consider the following 337-residue polypeptide: Anthranilate phosphoribosyltransferase (337 aa).

5-phospho-alpha-D-ribose 1-diphosphate is bound by residues glycine 81, 84–85 (GD), serine 89, 91–94 (NVST), 109–117 (KHGNRAMSS), and alanine 121. Glycine 81 is a binding site for anthranilate. Serine 93 is a Mg(2+) binding site. Residue asparagine 112 participates in anthranilate binding. Residue arginine 167 participates in anthranilate binding. Mg(2+) is bound by residues aspartate 226 and glutamate 227.

It belongs to the anthranilate phosphoribosyltransferase family. In terms of assembly, homodimer. Requires Mg(2+) as cofactor.

The catalysed reaction is N-(5-phospho-beta-D-ribosyl)anthranilate + diphosphate = 5-phospho-alpha-D-ribose 1-diphosphate + anthranilate. Its pathway is amino-acid biosynthesis; L-tryptophan biosynthesis; L-tryptophan from chorismate: step 2/5. Functionally, catalyzes the transfer of the phosphoribosyl group of 5-phosphorylribose-1-pyrophosphate (PRPP) to anthranilate to yield N-(5'-phosphoribosyl)-anthranilate (PRA). The chain is Anthranilate phosphoribosyltransferase from Afipia carboxidovorans (strain ATCC 49405 / DSM 1227 / KCTC 32145 / OM5) (Oligotropha carboxidovorans).